Reading from the N-terminus, the 313-residue chain is Methionyl-tRNA formyltransferase (313 aa).

(6S)-5,6,7,8-tetrahydrofolate is bound at residue 111 to 114 (SLLP).

Belongs to the Fmt family.

The catalysed reaction is L-methionyl-tRNA(fMet) + (6R)-10-formyltetrahydrofolate = N-formyl-L-methionyl-tRNA(fMet) + (6S)-5,6,7,8-tetrahydrofolate + H(+). In terms of biological role, attaches a formyl group to the free amino group of methionyl-tRNA(fMet). The formyl group appears to play a dual role in the initiator identity of N-formylmethionyl-tRNA by promoting its recognition by IF2 and preventing the misappropriation of this tRNA by the elongation apparatus. In Mesoplasma florum (strain ATCC 33453 / NBRC 100688 / NCTC 11704 / L1) (Acholeplasma florum), this protein is Methionyl-tRNA formyltransferase.